We begin with the raw amino-acid sequence, 374 residues long: Pectate lyase 2 (374 aa).

Residues 1–22 (MKYLLPTAAAGLLLLAAQPAMA) form the signal peptide. An intrachain disulfide couples cysteine 93 to cysteine 176. Aspartate 150, aspartate 152, glutamate 187, and aspartate 191 together coordinate Ca(2+). The active site involves arginine 239. Cysteine 350 and cysteine 373 are disulfide-bonded.

This sequence belongs to the polysaccharide lyase 1 family. PLADES subfamily. Ca(2+) serves as cofactor.

The protein resides in the secreted. The catalysed reaction is Eliminative cleavage of (1-&gt;4)-alpha-D-galacturonan to give oligosaccharides with 4-deoxy-alpha-D-galact-4-enuronosyl groups at their non-reducing ends.. It participates in glycan metabolism; pectin degradation; 2-dehydro-3-deoxy-D-gluconate from pectin: step 2/5. Its function is as follows. Involved in maceration and soft-rotting of plant tissue. This chain is Pectate lyase 2 (pel2), found in Pectobacterium carotovorum (Erwinia carotovora).